The primary structure comprises 340 residues: MRFIDKAKIHVKAGDGGNGCVAFRREKYVRMGGPSGGNGGKGGDVIIMADKSLKTLMDFRYKKHFKAENGQHGSGNNRHGRNGKDLIIKVPVGTVVKDAETGEILADLIYDGQKVVVAKGGRGGRGNAAFKTSTNQAPDYAEEGQPGEERWIELELKLIADIGIIGFPNAGKSTLISVLSKAKPKIADYPFTTLTPVLGVLQLDYGKSVVIADIPGLIEGASKGAGLGHEFLRHIERTKALIHMIDISDQRERDPIEAFEIINKELEKYSPELVKKPQIVVGNKIDMLSDRSLIEKLKKEFSKRGYPFVAVSLVTKEGLDQLIKLIAEVYEKISEKELIK.

The 159-residue stretch at 1–159 (MRFIDKAKIH…RWIELELKLI (159 aa)) folds into the Obg domain. Residues 160–331 (ADIGIIGFPN…LIKLIAEVYE (172 aa)) enclose the OBG-type G domain. GTP-binding positions include 166–173 (GFPNAGKS), 191–195 (FTTLT), 213–216 (DIPG), 283–286 (NKID), and 312–314 (SLV). Positions 173 and 193 each coordinate Mg(2+).

It belongs to the TRAFAC class OBG-HflX-like GTPase superfamily. OBG GTPase family. Monomer. It depends on Mg(2+) as a cofactor.

Its subcellular location is the cytoplasm. Its function is as follows. An essential GTPase which binds GTP, GDP and possibly (p)ppGpp with moderate affinity, with high nucleotide exchange rates and a fairly low GTP hydrolysis rate. Plays a role in control of the cell cycle, stress response, ribosome biogenesis and in those bacteria that undergo differentiation, in morphogenesis control. This chain is GTPase Obg, found in Persephonella marina (strain DSM 14350 / EX-H1).